Consider the following 207-residue polypeptide: Cytochrome c biogenesis ATP-binding export protein CcmA (207 aa).

The ABC transporter domain occupies 4–207 (LEARELLCER…RISLTQTGAA (204 aa)). 36-43 (GSNGAGKT) serves as a coordination point for ATP.

This sequence belongs to the ABC transporter superfamily. CcmA exporter (TC 3.A.1.107) family. As to quaternary structure, the complex is composed of two ATP-binding proteins (CcmA) and two transmembrane proteins (CcmB).

The protein localises to the cell inner membrane. The enzyme catalyses heme b(in) + ATP + H2O = heme b(out) + ADP + phosphate + H(+). Functionally, part of the ABC transporter complex CcmAB involved in the biogenesis of c-type cytochromes; once thought to export heme, this seems not to be the case, but its exact role is uncertain. Responsible for energy coupling to the transport system. The sequence is that of Cytochrome c biogenesis ATP-binding export protein CcmA from Escherichia coli O6:H1 (strain CFT073 / ATCC 700928 / UPEC).